Consider the following 571-residue polypeptide: E3 ubiquitin-protein ligase CHFR (571 aa).

The tract at residues 1 to 21 (MERPEEGKQSPPPQPWGRLLR) is disordered. An FHA domain is found at 38-89 (WTIGRRRGCDLSFPSNKLVSGDHCRIAVDEKSGQVTLEDTSTSGTVINKLKV). Residues 113 to 138 (EHRSGGGGISPKGSGPSVASDEVSSF) form a disordered region. The residue at position 152 (Ser152) is a Phosphoserine. The RING-type zinc-finger motif lies at 212–251 (CIICQDLLHDCVSLQPCMHTFCAACYSGWMERSSLCPTCR). Thr294 is subject to Phosphothreonine. The disordered stretch occupies residues 297–325 (MLQPKVRRSFSDEEGSSEDLLELSDVDSE). Residues 308–325 (DEEGSSEDLLELSDVDSE) show a composition bias toward acidic residues. The segment at 540 to 562 (PDCYWGRNCRTQVKAHHAMKFNH) adopts a PBZ-type zinc-finger fold.

This sequence belongs to the CHFR family. Interacts with HDAC1 and HDAC2. Interacts with PML (with sumoylated form of PML). Post-translationally, poly-ADP-ribosylated. In addition to binding non covalently poly(ADP-ribose) via its PBZ-type zinc finger, the protein is also covalently poly-ADP-ribosylated by PARP1. Autoubiquitinated; may regulate its cellular level. In terms of processing, phosphorylated by PKB. Phosphorylation may affect its E3 ligase activity.

Its subcellular location is the nucleus. The protein localises to the PML body. The catalysed reaction is S-ubiquitinyl-[E2 ubiquitin-conjugating enzyme]-L-cysteine + [acceptor protein]-L-lysine = [E2 ubiquitin-conjugating enzyme]-L-cysteine + N(6)-ubiquitinyl-[acceptor protein]-L-lysine.. It functions in the pathway protein modification; protein ubiquitination. In terms of biological role, E3 ubiquitin-protein ligase that functions in the antephase checkpoint by actively delaying passage into mitosis in response to microtubule poisons. Acts in early prophase before chromosome condensation, when the centrosome move apart from each other along the periphery of the nucleus. Probably involved in signaling the presence of mitotic stress caused by microtubule poisons by mediating the 'Lys-48'-linked ubiquitination of target proteins, leading to their degradation by the proteasome. Promotes the ubiquitination and subsequent degradation of AURKA and PLK1. Probably acts as a tumor suppressor, possibly by mediating the polyubiquitination of HDAC1, leading to its degradation. May also promote the formation of 'Lys-63'-linked polyubiquitin chains and functions with the specific ubiquitin-conjugating UBC13-MMS2 (UBE2N-UBE2V2) heterodimer. Substrates that are polyubiquitinated at 'Lys-63' are usually not targeted for degradation, but are rather involved in signaling cellular stress. This chain is E3 ubiquitin-protein ligase CHFR (CHFR), found in Pongo abelii (Sumatran orangutan).